The following is a 259-amino-acid chain: Complement factor D (259 aa).

A signal peptide spans 1–21 (MADRSGHLAALILLGAAVCVA). The propeptide at 22 to 26 (QPRGR) is activation peptide. A Peptidase S1 domain is found at 27–254 (ILGGQEAKSH…YVAWIDGVMA (228 aa)). Cys-52 and Cys-68 are disulfide-bonded. Residues His-67 and Asp-115 each act as charge relay system in the active site. 3 cysteine pairs are disulfide-bonded: Cys-149–Cys-215, Cys-180–Cys-196, and Cys-205–Cys-230. Catalysis depends on Ser-209, which acts as the Charge relay system. The self-inhibitor loop stretch occupies residues 224–228 (TSGSR).

It belongs to the peptidase S1 family. In terms of processing, CFD is activated by the removal of 5 residues at the N-terminus, named activation peptide, by the MASP-3 isoform of MASP1.

It is found in the secreted. The enzyme catalyses Selective cleavage of Arg-|-Lys bond in complement factor B when in complex with complement subcomponent C3b or with cobra venom factor.. Its activity is regulated as follows. Circulates in plasma in a mature but self-inhibited form. Activated by factor B (CFB), which displaces the self-inhibition loop. Associates with CFB complexed with complement C3b. Its function is as follows. Serine protease that initiates the alternative pathway of the complement system, a cascade of proteins that leads to phagocytosis and breakdown of pathogens and signaling that strengthens the adaptive immune system. In contrast to other complement pathways (classical, lectin and GZMK) that are directly activated by pathogens or antigen-antibody complexes, the alternative complement pathway is initiated by the spontaneous hydrolysis of complement C3. The alternative complement pathway acts as an amplification loop that enhances complement activation by mediating the formation of C3 and C5 convertases. Activated CFD cleaves factor B (CFB) when the latter is complexed with complement C3b, activating the C3 convertase of the alternative pathway. This is Complement factor D (CFD) from Sus scrofa (Pig).